A 782-amino-acid chain; its full sequence is Zinc finger protein 786 (782 aa).

In terms of domain architecture, KRAB spans 9–80 (LTFEDVAIYF…WRESQKSGNI (72 aa)). Residues 141-164 (PQRHDARAPPPLACGPSESTLKEG) are disordered. Residues 192–209 (CGESCWENNHLVMHQRGH) form a C2H2-type 1; degenerate zinc finger. The C2H2-type 2 zinc-finger motif lies at 240-262 (FRCGVCGKSFRRKLCLLRHLAAH). Residues 285–364 (SHRLPQQGEK…EGDTEALQHG (80 aa)) are disordered. The segment at 369–391 (CSCSECGERSPMSARLASPCRAH) adopts a C2H2-type 3; degenerate zinc-finger fold. 3 consecutive C2H2-type zinc fingers follow at residues 397–419 (FQCA…QHAH), 425–447 (FSCR…IRVH), and 453–475 (FRCA…QRLH). A C2H2-type 7; degenerate zinc finger spans residues 481 to 503 (FQCPECGLSFRLESMLRAHRLRH). 9 consecutive C2H2-type zinc fingers follow at residues 509–531 (FSCS…LRVH), 537–559 (FQCL…QHTH), 565–587 (FSCG…LRVH), 593–615 (FQCP…QRLH), 621–643 (FQCP…QLLH), 649–670 (FSCE…IRTH), 676–698 (FQCP…QGLH), 704–726 (FHCP…QRIH), and 732–754 (FACG…IRVH).

It belongs to the krueppel C2H2-type zinc-finger protein family.

Its subcellular location is the nucleus. Its function is as follows. May be involved in transcriptional regulation. In Homo sapiens (Human), this protein is Zinc finger protein 786 (ZNF786).